The chain runs to 1322 residues: FERM and PDZ domain-containing protein 4 (1322 aa).

The region spanning 33–66 (QVPPYGWEMTANRDGRDYFINHMTQAIPFDDPRL) is the WW domain. Positions 78–155 (KVEMRRDPVL…SILLTVIQPY (78 aa)) constitute a PDZ domain. The FERM domain maps to 204–519 (NVLKVYLENG…GYYRLLVDSR (316 aa)). 7 disordered regions span residues 809-847 (APPP…EIPV), 900-927 (SPES…TAQK), 952-983 (EFPA…PPKV), 1027-1080 (RKSK…STFN), 1105-1148 (SGLE…GQGD), 1160-1180 (AKDL…PSKL), and 1207-1227 (HFSL…TGSS). Positions 902–921 (ESSSDSGNETNSSEMTESSE) are enriched in low complexity. The span at 1041-1054 (NGNTTGKKQQGTKT) shows a compositional bias: low complexity. Positions 1067–1080 (TVSSRDSQHLSTFN) are enriched in polar residues. Residues 1207–1217 (HFSLQSSQGSS) show a composition bias toward polar residues.

In terms of assembly, interacts (via C-terminus) with DLG1, DLG2, DLG3 and DLG4/PSD95. Interacts (via N-terminus) with ARHGEF7; the interaction is mediated by the PDZ domain. Interacts with GPSM2 (via TPR repeat region).

The protein resides in the cell projection. It is found in the dendritic spine. Positive regulator of dendritic spine morphogenesis and density. Required for the maintenance of excitatory synaptic transmission. Binds phosphatidylinositol 4,5-bisphosphate. The protein is FERM and PDZ domain-containing protein 4 (FRMPD4) of Homo sapiens (Human).